Reading from the N-terminus, the 544-residue chain is High affinity immunoglobulin alpha and immunoglobulin mu Fc receptor (544 aa).

A signal peptide spans 1–16 (MPLFLILCLLQGSSFA). Residues 17 to 462 (LPQKRPHPRW…TFPEDESSSR (446 aa)) lie on the Extracellular side of the membrane. An Ig-like V-type domain is found at 61–169 (PNALKGSRLV…NMLFLSMNLT (109 aa)). The tract at residues 75-97 (GGAVTIQCHYAPSSVNRHQRKYW) is mediates immunoglobulin Fc fragment-binding. The cysteines at positions 82 and 153 are disulfide-linked. Asn167 is a glycosylation site (N-linked (GlcNAc...) asparagine). The tract at residues 218–325 (DTVASTPGTS…TTKADRPRED (108 aa)) is disordered. Composition is skewed to polar residues over residues 220 to 232 (VAST…TTAS) and 280 to 291 (ASKSRSMSNTTE). Over residues 307 to 325 (ASKDRREITTTKADRPRED) the composition is skewed to basic and acidic residues. A helical transmembrane segment spans residues 463–483 (TLAPVSTMLALFMLMALVLLQ). Over 484–544 (RKLRRRRTSQ…LTAPERNPGP (61 aa)) the chain is Cytoplasmic. The interval 511–544 (PQPDQLPHVERKMLQDDSLPAGASLTAPERNPGP) is disordered.

As to quaternary structure, interacts with IGHM; this interaction facilitates the endocytosis of IgM-coated microbes or IgM-antigen immune complexes. In terms of processing, N-glycosylated.

It is found in the cell membrane. Its function is as follows. Functions as a receptor for the Fc fragment of IgA and IgM. Binds IgA and IgM with high affinity and mediates their endocytosis. May function in the immune response to microbes mediated by IgA and IgM. The protein is High affinity immunoglobulin alpha and immunoglobulin mu Fc receptor (FCAMR) of Pongo abelii (Sumatran orangutan).